The sequence spans 111 residues: Phosphoribosyl-ATP pyrophosphatase (111 aa).

Belongs to the PRA-PH family.

Its subcellular location is the cytoplasm. The enzyme catalyses 1-(5-phospho-beta-D-ribosyl)-ATP + H2O = 1-(5-phospho-beta-D-ribosyl)-5'-AMP + diphosphate + H(+). The protein operates within amino-acid biosynthesis; L-histidine biosynthesis; L-histidine from 5-phospho-alpha-D-ribose 1-diphosphate: step 2/9. The protein is Phosphoribosyl-ATP pyrophosphatase of Azotobacter vinelandii (strain DJ / ATCC BAA-1303).